Reading from the N-terminus, the 246-residue chain is Mast cell protease 2 (246 aa).

An N-terminal signal peptide occupies residues 1 to 19 (MHRPPLPLVLLLLCCRAQA). Residues 20-21 (GE) constitute a propeptide, activation peptide. The 223-residue stretch at 22–244 (IIGGTESKPH…YRPWIDEVLK (223 aa)) folds into the Peptidase S1 domain. An intrachain disulfide couples cysteine 51 to cysteine 67. Active-site charge relay system residues include histidine 66 and aspartate 109. The N-linked (GlcNAc...) asparagine glycan is linked to asparagine 120. 2 disulfides stabilise this stretch: cysteine 143–cysteine 208 and cysteine 174–cysteine 187. Catalysis depends on serine 202, which acts as the Charge relay system.

Belongs to the peptidase S1 family. Granzyme subfamily.

Its subcellular location is the secreted. It localises to the cytoplasmic granule. In terms of biological role, putative mast cell chymase. The protein is Mast cell protease 2 of Ovis aries (Sheep).